The chain runs to 595 residues: Torsin-1A-interacting protein 1 (595 aa).

A disordered region spans residues 1–221; that stretch reads MAGERWQAEG…GNTKTNEREA (221 aa). The Nuclear segment spans residues 1–351; that stretch reads MAGERWQAEG…NEPSVKIKWW (351 aa). A compositionally biased stretch (basic and acidic residues) spans 24–38; the sequence is PIREGRRRLDPRNGD. Position 60 is a phosphoserine (S60). 2 stretches are compositionally biased toward basic and acidic residues: residues 70–101 and 115–132; these read FEPR…EVRE and RAQE…RLEQ. The segment covering 133-143 has biased composition (polar residues); that stretch reads HSQQPQLSPAT. Phosphoserine occurs at positions 134, 140, 151, 153, 154, and 155. A compositionally biased stretch (polar residues) spans 204-215; it reads LDSTYQTNGNTK. T235 carries the post-translational modification Phosphothreonine. Phosphoserine is present on residues S241, S244, and S255. 2 disordered regions span residues 250–286 and 319–340; these read ARSS…PAHE and IQKS…AIHH. Over residues 251-262 the composition is skewed to basic and acidic residues; sequence RSSDSLESRDEA. Residues 319–335 show a composition bias toward polar residues; that stretch reads IQKSNFGNQSPSTSRPQ. A Glycyl lysine isopeptide (Lys-Gly) (interchain with G-Cter in SUMO2) cross-link involves residue K321. At S328 the chain carries Phosphoserine. A helical membrane pass occupies residues 352-372; it reads LLGLVAILAVGLFWFFHTPAV. The tract at residues 368-595 is interaction with TOR1A; sequence HTPAVETTAV…ENTLKAGSCL (228 aa). Residues 373–400 are a coiled coil; the sequence is ETTAVQEFQNQMKQLQSKYQSQNEKLWK. The Perinuclear space portion of the chain corresponds to 373–595; it reads ETTAVQEFQN…ENTLKAGSCL (223 aa). N-linked (GlcNAc...) asparagine glycosylation occurs at N411.

This sequence belongs to the TOR1AIP family. In terms of assembly, interacts with ATP1B4. Interacts with TOR1A (ATP-bound). Interacts with TOR1B, TOR2A and TOR3A. Interacts with VIM. As to expression, expressed in the spinal cord and liver (at protein level).

Its subcellular location is the nucleus inner membrane. In terms of biological role, required for nuclear membrane integrity. Induces TOR1A and TOR1B ATPase activity and is required for their location on the nuclear membrane. Binds to A- and B-type lamins. Possible role in membrane attachment and assembly of the nuclear lamina. The chain is Torsin-1A-interacting protein 1 (Tor1aip1) from Mus musculus (Mouse).